Consider the following 100-residue polypeptide: Large ribosomal subunit protein eL21 (100 aa).

This sequence belongs to the eukaryotic ribosomal protein eL21 family.

The chain is Large ribosomal subunit protein eL21 from Pyrobaculum aerophilum (strain ATCC 51768 / DSM 7523 / JCM 9630 / CIP 104966 / NBRC 100827 / IM2).